The primary structure comprises 400 residues: 3-phenylpropionate/cinnamic acid dioxygenase ferredoxin--NAD(+) reductase component (400 aa).

5–36 (TIIIVGGGQAAAMAAASLRQQGFTGELHLFSD) is an FAD binding site. Position 146–174 (146–174 (SVVIVGAGTIGLELAASATQRGCKVTVIE)) interacts with NAD(+).

Belongs to the bacterial ring-hydroxylating dioxygenase ferredoxin reductase family. As to quaternary structure, this dioxygenase system consists of four proteins: the two subunits of the hydroxylase component (HcaE and HcaF), a ferredoxin (HcaC) and a ferredoxin reductase (HcaD). FAD serves as cofactor.

It catalyses the reaction 2 reduced [2Fe-2S]-[ferredoxin] + NAD(+) + H(+) = 2 oxidized [2Fe-2S]-[ferredoxin] + NADH. It participates in aromatic compound metabolism; 3-phenylpropanoate degradation. Its function is as follows. Part of the multicomponent 3-phenylpropionate dioxygenase, that converts 3-phenylpropionic acid (PP) and cinnamic acid (CI) into 3-phenylpropionate-dihydrodiol (PP-dihydrodiol) and cinnamic acid-dihydrodiol (CI-dihydrodiol), respectively. The polypeptide is 3-phenylpropionate/cinnamic acid dioxygenase ferredoxin--NAD(+) reductase component (Escherichia coli O17:K52:H18 (strain UMN026 / ExPEC)).